Consider the following 420-residue polypeptide: Probable pectate lyase C (420 aa).

Residues 1–20 (MKLSAPLLVSLAAFSQAVTA) form the signal peptide. Residues N49, N165, and N202 are each glycosylated (N-linked (GlcNAc...) asparagine). R205 is a catalytic residue. One can recognise an EF-hand domain in the interval 262–297 (NANFHGYVQNNYYDPDKDGQLDGFELGVSSSNYGGV). Positions 275, 277, 279, 281, and 286 each coordinate Ca(2+). The interval 358-396 (TMGGPGTLNGGTPAKDTDGDGIPDEAEKQLGTDPNTNDS) is disordered. An N-linked (GlcNAc...) asparagine glycan is attached at N394.

It belongs to the polysaccharide lyase 1 family. The cofactor is Ca(2+).

It is found in the secreted. The catalysed reaction is Eliminative cleavage of (1-&gt;4)-alpha-D-galacturonan to give oligosaccharides with 4-deoxy-alpha-D-galact-4-enuronosyl groups at their non-reducing ends.. Its function is as follows. Pectinolytic enzyme consist of four classes of enzymes: pectin lyase, polygalacturonase, pectin methylesterase and rhamnogalacturonase. Among pectinolytic enzymes, pectin lyase is the most important in depolymerization of pectin, since it cleaves internal glycosidic bonds of highly methylated pectins. Favors pectate, the anion, over pectin, the methyl ester. This chain is Probable pectate lyase C (plyC), found in Aspergillus fumigatus (strain CBS 144.89 / FGSC A1163 / CEA10) (Neosartorya fumigata).